A 567-amino-acid chain; its full sequence is Phosphoglucomutase-like protein 5 (567 aa).

Residues 1-26 form a disordered region; that stretch reads MEGSPIPVLTVPTAPYEDQRPAGGGG. A Phosphothreonine modification is found at Thr-120. Phosphoserine is present on Ser-122.

The protein belongs to the phosphohexose mutase family. In terms of assembly, interacts with DMD/dystrophin; the interaction is direct. Interacts with UTRN/utrophin. In terms of tissue distribution, detected in smooth and cardiac muscle at high levels and in skeletal muscle at low level. Present in other tissues due to vascular or other smooth muscle component. Low levels are present in liver, kidney, skin and brain (at protein level).

It localises to the cell junction. The protein resides in the adherens junction. Its subcellular location is the cytoplasm. The protein localises to the cytoskeleton. It is found in the cell membrane. It localises to the sarcolemma. In terms of biological role, component of adherens-type cell-cell and cell-matrix junctions. Has no phosphoglucomutase activity in vitro. The sequence is that of Phosphoglucomutase-like protein 5 from Homo sapiens (Human).